The following is an 847-amino-acid chain: Guanine nucleotide exchange factor VAV3 (847 aa).

The Calponin-homology (CH) domain maps to 1 to 119 (MEPWKQCAQW…ETLSRLSRTP (119 aa)). Position 141 is a phosphotyrosine (Y141). The 180-residue stretch at 192–371 (IRSCCLAEIR…KDLAQYVNEV (180 aa)) folds into the DH domain. The 103-residue stretch at 400 to 502 (RPQGDGEIRI…WLEQFEMALS (103 aa)) folds into the PH domain. The Phorbol-ester/DAG-type zinc finger occupies 513–562 (FHDFKMHTFTRVTSCRVCQMLLRGTFYQGYLCFKCGAKAHKECLGRVDNC). The interval 560–847 (DNCGRVNSVE…FPSTYVEEDE (288 aa)) is sufficient for interaction with ROS1. An SH3 1 domain is found at 592 to 660 (PGLPKMQVIR…PSDAVKPSPC (69 aa)). One can recognise an SH2 domain in the interval 672–766 (WYAGPMERLQ…TLDTTLQFPY (95 aa)). The SH3 2 domain maps to 788–847 (KVLGIAIARYDFCARDMRELSLLKGDMVKIYTKMSANGWWRGEVNGRVGWFPSTYVEEDE).

As to quaternary structure, interacts with the PH domain of APS. Interacts with ROS1; constitutive interaction that mediates VAV3 phosphorylation. Interacts (via SH2 domains) with the phosphorylated form of EPHA2. Phosphorylated. Phosphorylation can be mediated by ROS1. In osteoclasts, undergoes tyrosine phosphorylation in response to CSF1. As to expression, abundantly expressed in osteoclasts and mature osteoblasts. Also expressed in bone marrow macrophages (at protein level):.

In terms of biological role, exchange factor for GTP-binding proteins RhoA, RhoG and, to a lesser extent, Rac1. Binds physically to the nucleotide-free states of those GTPases. Plays an important role in angiogenesis. Its recruitment by phosphorylated EPHA2 is critical for EFNA1-induced RAC1 GTPase activation and vascular endothelial cell migration and assembly. May be important for integrin-mediated signaling, at least in some cell types. In osteoclasts, along with SYK tyrosine kinase, required for signaling through integrin alpha-v/beta-1 (ITAGV-ITGB1), a crucial event for osteoclast proper cytoskeleton organization and function. This signaling pathway involves RAC1, but not RHO, activation. Necessary for proper wound healing. In the course of wound healing, required for the phagocytotic cup formation preceding macrophage phagocytosis of apoptotic neutrophils. Responsible for integrin beta-2-mediated macrophage adhesion and, to a lesser extent, contributes to beta-3-mediated adhesion. Does not affect integrin beta-1-mediated adhesion. The sequence is that of Guanine nucleotide exchange factor VAV3 (Vav3) from Mus musculus (Mouse).